A 565-amino-acid chain; its full sequence is Formate--tetrahydrofolate ligase (565 aa).

Residue Thr65–Thr72 participates in ATP binding.

It belongs to the formate--tetrahydrofolate ligase family.

The enzyme catalyses (6S)-5,6,7,8-tetrahydrofolate + formate + ATP = (6R)-10-formyltetrahydrofolate + ADP + phosphate. It participates in one-carbon metabolism; tetrahydrofolate interconversion. The protein is Formate--tetrahydrofolate ligase of Syntrophus aciditrophicus (strain SB).